We begin with the raw amino-acid sequence, 433 residues long: Histidinol dehydrogenase (433 aa).

Residues tyrosine 129, glutamine 191, and asparagine 214 each coordinate NAD(+). Residues serine 237, glutamine 259, and histidine 262 each coordinate substrate. Zn(2+) is bound by residues glutamine 259 and histidine 262. Active-site proton acceptor residues include glutamate 326 and histidine 327. Histidine 327, aspartate 360, glutamate 414, and histidine 419 together coordinate substrate. Aspartate 360 is a binding site for Zn(2+). Histidine 419 provides a ligand contact to Zn(2+).

This sequence belongs to the histidinol dehydrogenase family. It depends on Zn(2+) as a cofactor.

The enzyme catalyses L-histidinol + 2 NAD(+) + H2O = L-histidine + 2 NADH + 3 H(+). It functions in the pathway amino-acid biosynthesis; L-histidine biosynthesis; L-histidine from 5-phospho-alpha-D-ribose 1-diphosphate: step 9/9. Functionally, catalyzes the sequential NAD-dependent oxidations of L-histidinol to L-histidinaldehyde and then to L-histidine. In Methanosarcina barkeri (strain Fusaro / DSM 804), this protein is Histidinol dehydrogenase.